The chain runs to 541 residues: Glutamyl-tRNA(Gln) amidotransferase subunit B, mitochondrial (541 aa).

Belongs to the GatB/GatE family. GatB subfamily. Subunit of the heterotrimeric GatFAB amidotransferase (AdT) complex, composed of A, B and F subunits.

Its subcellular location is the mitochondrion. It catalyses the reaction L-glutamyl-tRNA(Gln) + L-glutamine + ATP + H2O = L-glutaminyl-tRNA(Gln) + L-glutamate + ADP + phosphate + H(+). Its function is as follows. Allows the formation of correctly charged Gln-tRNA(Gln) through the transamidation of misacylated Glu-tRNA(Gln) in the mitochondria. The reaction takes place in the presence of glutamine and ATP through an activated gamma-phospho-Glu-tRNA(Gln). The sequence is that of Glutamyl-tRNA(Gln) amidotransferase subunit B, mitochondrial from Saccharomyces cerevisiae (strain YJM789) (Baker's yeast).